Here is a 547-residue protein sequence, read N- to C-terminus: Chaperonin GroEL (547 aa).

Residues 30-33 (TLGP), Lys51, 87-91 (DGTTT), Gly415, and Asp496 each bind ATP. Positions 527-547 (ENTPDMPAMPPGGMGGMGGMY) are disordered. Residues 538–547 (GGMGGMGGMY) are compositionally biased toward gly residues.

This sequence belongs to the chaperonin (HSP60) family. Forms a cylinder of 14 subunits composed of two heptameric rings stacked back-to-back. Interacts with the co-chaperonin GroES.

It localises to the cytoplasm. The enzyme catalyses ATP + H2O + a folded polypeptide = ADP + phosphate + an unfolded polypeptide.. In terms of biological role, together with its co-chaperonin GroES, plays an essential role in assisting protein folding. The GroEL-GroES system forms a nano-cage that allows encapsulation of the non-native substrate proteins and provides a physical environment optimized to promote and accelerate protein folding. The chain is Chaperonin GroEL from Chlorobium phaeovibrioides (strain DSM 265 / 1930) (Prosthecochloris vibrioformis (strain DSM 265)).